The sequence spans 133 residues: Large ribosomal subunit protein bL17 (133 aa).

Belongs to the bacterial ribosomal protein bL17 family. As to quaternary structure, part of the 50S ribosomal subunit. Contacts protein L32.

The protein is Large ribosomal subunit protein bL17 of Pseudoalteromonas translucida (strain TAC 125).